A 238-amino-acid polypeptide reads, in one-letter code: DNA repair protein RecO (238 aa).

It belongs to the RecO family.

Involved in DNA repair and RecF pathway recombination. The protein is DNA repair protein RecO of Aliivibrio fischeri (strain ATCC 700601 / ES114) (Vibrio fischeri).